We begin with the raw amino-acid sequence, 433 residues long: Serine carboxypeptidase-like 8 (433 aa).

A signal peptide spans methionine 1 to serine 19. 3 cysteine pairs are disulfide-bonded: cysteine 78–cysteine 323, cysteine 241–cysteine 255, and cysteine 279–cysteine 289. A glycan (N-linked (GlcNAc...) asparagine) is linked at asparagine 99. The active site involves serine 173. N-linked (GlcNAc...) asparagine glycosylation is found at asparagine 283, asparagine 324, and asparagine 342. Active-site residues include aspartate 358 and histidine 411. Residue asparagine 418 is glycosylated (N-linked (GlcNAc...) asparagine).

Belongs to the peptidase S10 family. Post-translationally, N-glycosylated. Highly expressed in seedlings. Expressed in leaves, stems, flowers and siliques, and at low levels in roots.

It is found in the vacuole. It catalyses the reaction 1-O-(trans-sinapoyl)-beta-D-glucose + (S)-malate = sinapoyl (S)-malate + D-glucose. The catalysed reaction is 2 1-O-(trans-sinapoyl)-beta-D-glucose = 1,2-di-O-sinapoyl beta-D-glucose + D-glucose. 95% inhibition by diisopropyl fluorophosphate (DFP) and 30% by phenylmethylsulfonyl fluoride (PMSF). In terms of biological role, involved in plants secondary metabolism. Functions as acyltransferase to form the sinapate ester sinapoylmalate. Also capable of catalyzing the formation of 1,2-bis-O-sinapoyl beta-D-glucoside. The chain is Serine carboxypeptidase-like 8 from Arabidopsis thaliana (Mouse-ear cress).